The primary structure comprises 354 residues: Chorismate synthase (354 aa).

R48 serves as a coordination point for NADP(+). FMN is bound by residues 125–127 (RAS), A280, 295–299 (KPIPS), and R321.

Belongs to the chorismate synthase family. In terms of assembly, homotetramer. The cofactor is FMNH2.

It catalyses the reaction 5-O-(1-carboxyvinyl)-3-phosphoshikimate = chorismate + phosphate. Its pathway is metabolic intermediate biosynthesis; chorismate biosynthesis; chorismate from D-erythrose 4-phosphate and phosphoenolpyruvate: step 7/7. In terms of biological role, catalyzes the anti-1,4-elimination of the C-3 phosphate and the C-6 proR hydrogen from 5-enolpyruvylshikimate-3-phosphate (EPSP) to yield chorismate, which is the branch point compound that serves as the starting substrate for the three terminal pathways of aromatic amino acid biosynthesis. This reaction introduces a second double bond into the aromatic ring system. This is Chorismate synthase from Syntrophus aciditrophicus (strain SB).